A 959-amino-acid polypeptide reads, in one-letter code: Outer capsid protein VP2 (959 aa).

The protein belongs to the orbivirus VP2 family.

The protein resides in the virion. The VP2 protein is one of the two proteins (with VP5) which constitute the virus particle outer capsid. It is the major target of the host immunogenic response. Responsible for viral attachment to target host cell, probably by binding to sialic acid. This attachment induces virion internalization predominantly through clathrin-dependent endocytosis. This is Outer capsid protein VP2 (Segment-2) from Antilocapra americana (Pronghorn).